Consider the following 1133-residue polypeptide: Error-prone DNA polymerase (1133 aa).

This sequence belongs to the DNA polymerase type-C family. DnaE2 subfamily.

It localises to the cytoplasm. The catalysed reaction is DNA(n) + a 2'-deoxyribonucleoside 5'-triphosphate = DNA(n+1) + diphosphate. DNA polymerase involved in damage-induced mutagenesis and translesion synthesis (TLS). It is not the major replicative DNA polymerase. This Anaeromyxobacter sp. (strain K) protein is Error-prone DNA polymerase.